Consider the following 483-residue polypeptide: MGLFDFSVKELHDKLVKKEITPFDLVTESFNRIEAVEDKVGSFITLNKETALGVAEELGDAGIDPNNMLAGLPIGIKDNIVTKNLRTTAASKILENFDPIYDATVVSKLKNAQTINIGKLNMDEFAMGSSTETSYFHKTHNPWDLSRVPGGSSGGSASAVAAGEVLFSLGSDTGGSIRQPAAFCGVVGMKPTYGRVSRFGLIAFASSLDQIGPITKNVEDNAYLLEAISGLDANDSTSINQPVERFSDSLTGDIKGLRIGVPKEYLGEGVDPGVKQAVLDALKTLEKLGATWDEVSLPHSEYGVASYYILASSEASSNLSRFDGVRYGYRSPNATTLEELYTKTRSEGFGDEVKRRIMLGTYALSSGYYDAYYKKAQQARTLIKQDFVDVFKNYDVIIGPSSPTTAFKIDGMINDPITMYSNDILTVPINLAGVPAISVPCGFSEGLPVGLQIIGNYFEESLLYKVAHAFEQETTFHKEKPNL.

Catalysis depends on charge relay system residues Lys-77 and Ser-152. Ser-176 serves as the catalytic Acyl-ester intermediate.

This sequence belongs to the amidase family. GatA subfamily. As to quaternary structure, heterotrimer of A, B and C subunits.

The enzyme catalyses L-glutamyl-tRNA(Gln) + L-glutamine + ATP + H2O = L-glutaminyl-tRNA(Gln) + L-glutamate + ADP + phosphate + H(+). Allows the formation of correctly charged Gln-tRNA(Gln) through the transamidation of misacylated Glu-tRNA(Gln) in organisms which lack glutaminyl-tRNA synthetase. The reaction takes place in the presence of glutamine and ATP through an activated gamma-phospho-Glu-tRNA(Gln). The sequence is that of Glutamyl-tRNA(Gln) amidotransferase subunit A from Listeria innocua serovar 6a (strain ATCC BAA-680 / CLIP 11262).